Consider the following 235-residue polypeptide: Orotidine 5'-phosphate decarboxylase (235 aa).

Residues Asp-17, Lys-39, 66 to 75 (DLKLHDIGNT), Thr-121, Arg-182, Gln-191, Gly-211, and Arg-212 each bind substrate. Residue Lys-68 is the Proton donor of the active site.

Belongs to the OMP decarboxylase family. Type 1 subfamily. As to quaternary structure, homodimer.

The catalysed reaction is orotidine 5'-phosphate + H(+) = UMP + CO2. It participates in pyrimidine metabolism; UMP biosynthesis via de novo pathway; UMP from orotate: step 2/2. In terms of biological role, catalyzes the decarboxylation of orotidine 5'-monophosphate (OMP) to uridine 5'-monophosphate (UMP). The sequence is that of Orotidine 5'-phosphate decarboxylase from Rhodopseudomonas palustris (strain BisB5).